The primary structure comprises 35 residues: Mu-theraphotoxin-Ca2a (35 aa).

Disulfide bonds link cysteine 2/cysteine 17, cysteine 9/cysteine 24, and cysteine 16/cysteine 31.

The protein belongs to the neurotoxin 10 (Hwtx-1) family. 10 (haplotoxin-1) subfamily. As to expression, expressed by the venom gland.

The protein resides in the secreted. Potently inhibits Nav1.7/SCN9A (IC(50)=98.1 nM), and moderately inhibits Nav1.2/SCN2A (IC(50)=216.3 nM), Nav1.6/SCN8A (IC(50)=313.6 nM), and Nav1.3/SCN3A (IC(50)=491.3 nM). Hyperpolarizes the slow inactivation, but does not alter the voltage-dependent activation or fast inactivation of Nav1.7/SCN9A. Binds with Nav1.7/SCN9A at the extracellular S3-S4 linker of domain II (site 4). In vivo, exhibits dose-dependent analgesic efficacy by reducing pain responses in rodent models of formalin-induced paw licking, hot plate test, and acetic acid-induced writhing. This is Mu-theraphotoxin-Ca2a from Cyriopagopus albostriatus (Cambodian tiger tarantula).